A 397-amino-acid chain; its full sequence is Glutamate 5-kinase (397 aa).

The tract at residues 1–28 is disordered; it reads MVADLTSDISESQEQETETNSANNNGAV. Position 40 (Lys-40) interacts with ATP. Positions 80, 168, and 180 each coordinate substrate. Residues 200–201 and 243–249 contribute to the ATP site; these read SD and SGGMASK. The PUA domain maps to 306–383; the sequence is HGQVYIDQGA…QEIADILGYE (78 aa).

Belongs to the glutamate 5-kinase family.

It localises to the cytoplasm. It catalyses the reaction L-glutamate + ATP = L-glutamyl 5-phosphate + ADP. It participates in amino-acid biosynthesis; L-proline biosynthesis; L-glutamate 5-semialdehyde from L-glutamate: step 1/2. Functionally, catalyzes the transfer of a phosphate group to glutamate to form L-glutamate 5-phosphate. The protein is Glutamate 5-kinase of Zymomonas mobilis subsp. mobilis (strain ATCC 31821 / ZM4 / CP4).